A 490-amino-acid polypeptide reads, in one-letter code: UDP-glycosyltransferase 86A1 (490 aa).

UDP-alpha-D-glucose is bound by residues Ser294, 352–354, 369–377, and 391–394; these read CCQ, HCGWNSILE, and LTDQ.

It belongs to the UDP-glycosyltransferase family.

The chain is UDP-glycosyltransferase 86A1 (UGT86A1) from Arabidopsis thaliana (Mouse-ear cress).